Reading from the N-terminus, the 98-residue chain is Aspartyl/glutamyl-tRNA(Asn/Gln) amidotransferase subunit C (98 aa).

It belongs to the GatC family. As to quaternary structure, heterotrimer of A, B and C subunits.

The catalysed reaction is L-glutamyl-tRNA(Gln) + L-glutamine + ATP + H2O = L-glutaminyl-tRNA(Gln) + L-glutamate + ADP + phosphate + H(+). It carries out the reaction L-aspartyl-tRNA(Asn) + L-glutamine + ATP + H2O = L-asparaginyl-tRNA(Asn) + L-glutamate + ADP + phosphate + 2 H(+). In terms of biological role, allows the formation of correctly charged Asn-tRNA(Asn) or Gln-tRNA(Gln) through the transamidation of misacylated Asp-tRNA(Asn) or Glu-tRNA(Gln) in organisms which lack either or both of asparaginyl-tRNA or glutaminyl-tRNA synthetases. The reaction takes place in the presence of glutamine and ATP through an activated phospho-Asp-tRNA(Asn) or phospho-Glu-tRNA(Gln). This Roseiflexus castenholzii (strain DSM 13941 / HLO8) protein is Aspartyl/glutamyl-tRNA(Asn/Gln) amidotransferase subunit C.